A 253-amino-acid chain; its full sequence is Imidazole glycerol phosphate synthase subunit HisF (253 aa).

Residues D11 and D130 contribute to the active site.

It belongs to the HisA/HisF family. Heterodimer of HisH and HisF.

It localises to the cytoplasm. It catalyses the reaction 5-[(5-phospho-1-deoxy-D-ribulos-1-ylimino)methylamino]-1-(5-phospho-beta-D-ribosyl)imidazole-4-carboxamide + L-glutamine = D-erythro-1-(imidazol-4-yl)glycerol 3-phosphate + 5-amino-1-(5-phospho-beta-D-ribosyl)imidazole-4-carboxamide + L-glutamate + H(+). It participates in amino-acid biosynthesis; L-histidine biosynthesis; L-histidine from 5-phospho-alpha-D-ribose 1-diphosphate: step 5/9. In terms of biological role, IGPS catalyzes the conversion of PRFAR and glutamine to IGP, AICAR and glutamate. The HisF subunit catalyzes the cyclization activity that produces IGP and AICAR from PRFAR using the ammonia provided by the HisH subunit. The chain is Imidazole glycerol phosphate synthase subunit HisF from Geotalea daltonii (strain DSM 22248 / JCM 15807 / FRC-32) (Geobacter daltonii).